The primary structure comprises 274 residues: Large ribosomal subunit protein uL2 (274 aa).

The disordered stretch occupies residues 223 to 274 (VAMNPVDHPHGGGEGRTSGGRHPVTPWGVPTKGYKTRSNKRTDKYIVRRRNK).

This sequence belongs to the universal ribosomal protein uL2 family. As to quaternary structure, part of the 50S ribosomal subunit. Forms a bridge to the 30S subunit in the 70S ribosome.

Functionally, one of the primary rRNA binding proteins. Required for association of the 30S and 50S subunits to form the 70S ribosome, for tRNA binding and peptide bond formation. It has been suggested to have peptidyltransferase activity; this is somewhat controversial. Makes several contacts with the 16S rRNA in the 70S ribosome. This chain is Large ribosomal subunit protein uL2, found in Shewanella putrefaciens (strain CN-32 / ATCC BAA-453).